A 1140-amino-acid chain; its full sequence is MARYTQRPENALKRANEFIEVGKPLRALDTLQEVFRNKRWNYAYSETVIEPLMFKYLYLCVELKKSHIAKEGLFQYRNMFQLVNVNSLENVIRGYLKMAEEHTEAAQAQSSAAVAVLELDDLDNIATPESILMSAVCGEDAQDRSDRTILLPWVKFLWESYCQCLELLRVNTHCEALYHDIARMAFQFCLKYNRKSEFRRLCDKLRKHLEDICKSSNQTTGVSINKVETQQLCLDTRLYLLDSAIQMELWQEAYKAIEDIHGLMALSKKTPVPKTMANYYQKLAMVFSKAGNQLFHAAALLKLFQLTRELKKNLTKDDLQRMAAHVLLATLSIPLPSAHPEFDRFIEADKSPLEKAQKLAVLLGLPQPPTRVSLIREVVRLNVPQLVSEDFRNLYNWLEIDFNPLNLCKRIQSIVDIIEGGPAESNLLTPYIQSLKDVTIMRLIRQISQVYESIEFKRLLELASFCNIFELEKLLVESVRHNDMQIRIDHQKNSIYFGTDLTESQREYRPDGPSLQSMPSEQIRSQLVNMSTVLTRAVSIVYPNRERDQRAKLRTQMVHHYHEIKDREHQRILQRQKIIEDRKEYIEKQNNAREEEEARRQEEESRKAKLAEQKRLEQEQEERERKRHQNEIQAIREKSLKEKVQQISQTAHGKKMLSKLDEEGIKKLDAEQIAKRENEELQREAKELQSKLKSQEKKVDYFERAKRLEEIPLFEKYLAEKQVKDKEFWEATEKTRIENAIAERKDAVSQQERLKRMYPDRDEYLDALKKERASLYVEKLKKFEIALEVERKKRLADRIVRRREERRQAFLREKEEERLRKEEEIRLAQAAEERAAAEARRLEREAEDEKRRAQYEKQRAKEEEAERKIKEDRERLAREVAVERERSEKERDTWRPRGGDRPSAPAGGAGEWRRAAPPAGERNDRGAERSERGGDRNERGGDRIERGGDRIERGGERAERGGDRDRKDDGGADSSWRVRREPDSQRAAGAKDAGGAPASRDDKWRRGGDRERDRDFRNDGPRRDRDDRDDRDRGGFRRNDGPRRNDEPQRETGGNWRDAPRQSDRDNRRPGGERRDRDGRDVRGDQRGPASKEAGGGGGGGNWRTAPAPRDEKPAAKRDQPQDKENKGGDDGEWTSVKRR.

Positions 319 to 502 (LQRMAAHVLL…NSIYFGTDLT (184 aa)) constitute a PCI domain. 3 stretches are compositionally biased toward basic and acidic residues: residues 589–624 (QNNAREEEEARRQEEESRKAKLAEQKRLEQEQEERE), 830–900 (AAEE…RGGD), and 921–984 (ERND…EPDS). Disordered regions lie at residues 589–632 (QNNA…QNEI) and 830–1140 (AAEE…VKRR). The segment covering 987-998 (AAGAKDAGGAPA) has biased composition (low complexity). Composition is skewed to basic and acidic residues over residues 999 to 1050 (SRDD…EPQR), 1058 to 1086 (DAPRQSDRDNRRPGGERRDRDGRDVRGDQ), and 1109 to 1130 (PRDEKPAAKRDQPQDKENKGGD).

It belongs to the eIF-3 subunit A family. As to quaternary structure, component of the eukaryotic translation initiation factor 3 (eIF-3) complex. The eIF-3 complex interacts with pix.

Its subcellular location is the cytoplasm. RNA-binding component of the eukaryotic translation initiation factor 3 (eIF-3) complex, which is involved in protein synthesis of a specialized repertoire of mRNAs and, together with other initiation factors, stimulates binding of mRNA and methionyl-tRNAi to the 40S ribosome. The eIF-3 complex specifically targets and initiates translation of a subset of mRNAs involved in cell proliferation. This is Eukaryotic translation initiation factor 3 subunit A from Drosophila ananassae (Fruit fly).